We begin with the raw amino-acid sequence, 702 residues long: Ribosomal RNA large subunit methyltransferase K/L (702 aa).

Residues 43 to 154 (LVYQSLMWSR…KETASIALDL (112 aa)) enclose the THUMP domain.

Belongs to the methyltransferase superfamily. RlmKL family.

It is found in the cytoplasm. The enzyme catalyses guanosine(2445) in 23S rRNA + S-adenosyl-L-methionine = N(2)-methylguanosine(2445) in 23S rRNA + S-adenosyl-L-homocysteine + H(+). The catalysed reaction is guanosine(2069) in 23S rRNA + S-adenosyl-L-methionine = N(2)-methylguanosine(2069) in 23S rRNA + S-adenosyl-L-homocysteine + H(+). Its function is as follows. Specifically methylates the guanine in position 2445 (m2G2445) and the guanine in position 2069 (m7G2069) of 23S rRNA. This chain is Ribosomal RNA large subunit methyltransferase K/L, found in Shigella sonnei (strain Ss046).